A 79-amino-acid chain; its full sequence is MEETGAVFRKELVSKLLHLHFKDKKTKVSGDALQLVAELLKIFVVEAAIRSVRQAQAEGLAHVDVEQLEKVLPQLLLDF.

Met1 is subject to N-acetylmethionine.

The protein belongs to the CENP-X/MHF2 family. As to quaternary structure, heterodimer with CENPX, sometimes called MHF; this interaction stabilizes both partners. MHF heterodimers can assemble to form tetrameric structures. MHF also coassemble with CENPT-CENPW heterodimers at centromeres to form the tetrameric CENP-T-W-S-X complex. Forms a discrete complex with FANCM and CENPX, called FANCM-MHF; this interaction, probably mediated by direct binding between CENPS and FANCM, leads to synergistic activation of double-stranded DNA binding and strongly stimulates FANCM-mediated DNA remodeling. Recruited by FANCM to the Fanconi anemia (FA) core complex, which consists of CENPS, CENPX, FANCA, FANCB, FANCC, FANCE, FANCF, FANCG, FANCL, FANCM, FAAP24 and FAAP100. The FA core complex associates with Bloom syndrome (BLM) complex, which consists of at least BLM, DNA topoisomerase 3-alpha (TOP3A), RMI1/BLAP75, RPA1/RPA70 and RPA2/RPA32. The super complex between FA and BLM is called BRAFT.

Its subcellular location is the nucleus. The protein localises to the chromosome. It localises to the centromere. The protein resides in the kinetochore. Functionally, DNA-binding component of the Fanconi anemia (FA) core complex. Required for the normal activation of the FA pathway, leading to monoubiquitination of the FANCI-FANCD2 complex in response to DNA damage, cellular resistance to DNA cross-linking drugs, and prevention of chromosomal breakage. In complex with CENPS (MHF heterodimer), crucial cofactor for FANCM in both binding and ATP-dependent remodeling of DNA. Stabilizes FANCM. In complex with CENPS and FANCM (but not other FANC proteins), rapidly recruited to blocked forks and promotes gene conversion at blocked replication forks. In complex with CENPS, CENPT and CENPW (CENP-T-W-S-X heterotetramer), involved in the formation of a functional kinetochore outer plate, which is essential for kinetochore-microtubule attachment and faithful mitotic progression. As a component of MHF and CENP-T-W-S-X complexes, binds DNA and bends it to form a nucleosome-like structure. DNA-binding function is fulfilled in the presence of CENPS, with the following preference for DNA substates: Holliday junction &gt; double-stranded &gt; splay arm &gt; single-stranded. Does not bind DNA on its own. This is Centromere protein X (CENPX) from Bos taurus (Bovine).